The sequence spans 335 residues: Glycerol-3-phosphate dehydrogenase [NAD(P)+] (335 aa).

NADPH is bound by residues Ser-12, Trp-13, and Lys-107. Sn-glycerol 3-phosphate is bound by residues Lys-107, Gly-138, and Ser-140. An NADPH-binding site is contributed by Ala-142. Residues Lys-193, Asp-246, Ser-256, Arg-257, and Asn-258 each contribute to the sn-glycerol 3-phosphate site. Catalysis depends on Lys-193, which acts as the Proton acceptor. Residue Arg-257 coordinates NADPH. NADPH is bound by residues Val-281 and Glu-283.

Belongs to the NAD-dependent glycerol-3-phosphate dehydrogenase family.

The protein localises to the cytoplasm. The enzyme catalyses sn-glycerol 3-phosphate + NAD(+) = dihydroxyacetone phosphate + NADH + H(+). The catalysed reaction is sn-glycerol 3-phosphate + NADP(+) = dihydroxyacetone phosphate + NADPH + H(+). It functions in the pathway membrane lipid metabolism; glycerophospholipid metabolism. In terms of biological role, catalyzes the reduction of the glycolytic intermediate dihydroxyacetone phosphate (DHAP) to sn-glycerol 3-phosphate (G3P), the key precursor for phospholipid synthesis. The protein is Glycerol-3-phosphate dehydrogenase [NAD(P)+] of Geobacter metallireducens (strain ATCC 53774 / DSM 7210 / GS-15).